A 263-amino-acid polypeptide reads, in one-letter code: Probable ABC transporter permease protein ycf63 (263 aa).

Helical transmembrane passes span 43–63, 70–89, 150–170, 188–208, and 230–250; these read IVGP…SMVF, EFLY…IAFT, ILSI…AFVM, ISDF…IGFI, and SVVT…YFMF.

The protein belongs to the MlaE permease family.

The protein resides in the plastid. It localises to the chloroplast membrane. Its function is as follows. Could be part of an ABC transporter complex. The sequence is that of Probable ABC transporter permease protein ycf63 (ycf63) from Pyropia yezoensis (Susabi-nori).